The sequence spans 326 residues: GATA zinc finger domain-containing protein 21 (326 aa).

Disordered stretches follow at residues 1-102 (MFRN…NNNN) and 145-238 (QNQS…TPER). Composition is skewed to low complexity over residues 17-102 (NTNL…NNNN) and 148-164 (SSSSSSGASGSRSGSSA). Residues 165-189 (LNSINNNNYSPTTSSLNRVRNQYNQ) are compositionally biased toward polar residues. Positions 193–218 (DEEDDDYDNGAEDGFDYDGDDNEDGS) are enriched in acidic residues. The segment at 239–266 (CSNCKITHSSYWRRITVNGQKLDFCNAC) adopts a GATA-type zinc-finger fold. Positions 277-326 (IKESKQRHSIQNIMNQNQEEEEEEREEEEEEEEEEDEEFETLEEEEEDDE) are disordered. A compositionally biased stretch (acidic residues) spans 294–326 (QEEEEEEREEEEEEEEEEDEEFETLEEEEEDDE).

The polypeptide is GATA zinc finger domain-containing protein 21 (gtaU) (Dictyostelium discoideum (Social amoeba)).